We begin with the raw amino-acid sequence, 358 residues long: C-X-C chemokine receptor type 4 (358 aa).

The interval 1-25 is important for chemokine binding and signaling; sequence MDGFSGGIDINIFDSNSTENGSGDF. Residues 1–44 are Extracellular-facing; it reads MDGFSGGIDINIFDSNSTENGSGDFEDFSEPCFMHDNSDFNRIF. N-linked (GlcNAc...) asparagine glycosylation is found at N16 and N20. Disulfide bonds link C32-C281 and C113-C190. The chain crosses the membrane as a helical span at residues 45-67; the sequence is LPTIYSFIFLLGIIGNGLVVVVM. At 68–81 the chain is on the cytoplasmic side; the sequence is GYQKKSRTMTDKYR. The helical transmembrane segment at 82–103 threads the bilayer; sequence LHLSVADLLFVFTLPFWSVDAA. The chemokine binding stretch occupies residues 98–101; the sequence is WSVD. Topologically, residues 104–114 are extracellular; sequence IGWYFKEFLCK. Residues 115-134 traverse the membrane as a helical segment; it reads AVHVIYTVNLYSSVLILAFI. The tract at residues 117–121 is chemokine binding; the sequence is HVIYT. The Cytoplasmic portion of the chain corresponds to 135-158; sequence SLDRYLAIVHATNSQGSRKMLADK. Positions 139 to 151 are involved in dimerization; when bound to chemokine; that stretch reads YLAIVHATNSQGS. The chain crosses the membrane as a helical span at residues 159–178; the sequence is VVYAGVWLPALLLTVPDLVF. At 179–202 the chain is on the extracellular side; that stretch reads ARVSDENGQFVCDRIYPIDNRETW. Positions 190–194 are chemokine binding, important for signaling; that stretch reads CDRIY. A helical membrane pass occupies residues 203-223; it reads TVGFRFLHITVGLILPGLIIL. Over 224-248 the chain is Cytoplasmic; it reads ICYCVIISKLSHSKGHQKRKALKTT. The chain crosses the membrane as a helical span at residues 249 to 268; that stretch reads VILILAFFACWLPYYVCLTT. Topologically, residues 269-289 are extracellular; sequence DTFMLLGLLKADCIWENTLHK. A helical transmembrane segment spans residues 290 to 309; the sequence is AISITEALAFFHCCLNPILY. The Cytoplasmic portion of the chain corresponds to 310-358; it reads AFLGAKFKTSAQNAFTSVSRGSSLKILSKKRAGLSSVSTESESSSFHSS. Positions 338–358 are disordered; that stretch reads KKRAGLSSVSTESESSSFHSS. Positions 344-358 are enriched in low complexity; sequence SSVSTESESSSFHSS.

Belongs to the G-protein coupled receptor 1 family. As to quaternary structure, monomer. Can form dimers. Sulfation is required for efficient binding of cxcl12/sdf-1alpha and promotes its dimerization. Post-translationally, O- and N-glycosylated.

It localises to the cell membrane. It is found in the cytoplasm. The protein localises to the nucleus. Its subcellular location is the early endosome. The protein resides in the late endosome. It localises to the lysosome. Receptor for the C-X-C chemokine cxcl12/sdf-1. Transduces a signal by increasing the intracellular calcium ion level. Signaling with cxcl12/sdf-1 mediates the directional movement of mesodermal cells during gastrulation. May play a role in the migration of embryonic presumptive primordial germ cells (pPGCs). May also be involved in regulating migration of hematopoietic stem cells into the larval liver. This is C-X-C chemokine receptor type 4 from Xenopus tropicalis (Western clawed frog).